Here is a 410-residue protein sequence, read N- to C-terminus: Multifunctional CCA protein (410 aa).

ATP contacts are provided by Gly8 and Arg11. CTP is bound by residues Gly8 and Arg11. 2 residues coordinate Mg(2+): Asp21 and Asp23. Positions 91, 137, and 140 each coordinate ATP. Arg91, Arg137, and Arg140 together coordinate CTP. Residues 225-326 (SGIHTLMTLQ…LNVLKKTDAF (102 aa)) enclose the HD domain.

The protein belongs to the tRNA nucleotidyltransferase/poly(A) polymerase family. Bacterial CCA-adding enzyme type 1 subfamily. Monomer. Can also form homodimers and oligomers. The cofactor is Mg(2+). Requires Ni(2+) as cofactor.

The catalysed reaction is a tRNA precursor + 2 CTP + ATP = a tRNA with a 3' CCA end + 3 diphosphate. It carries out the reaction a tRNA with a 3' CCA end + 2 CTP + ATP = a tRNA with a 3' CCACCA end + 3 diphosphate. Its function is as follows. Catalyzes the addition and repair of the essential 3'-terminal CCA sequence in tRNAs without using a nucleic acid template. Adds these three nucleotides in the order of C, C, and A to the tRNA nucleotide-73, using CTP and ATP as substrates and producing inorganic pyrophosphate. tRNA 3'-terminal CCA addition is required both for tRNA processing and repair. Also involved in tRNA surveillance by mediating tandem CCA addition to generate a CCACCA at the 3' terminus of unstable tRNAs. While stable tRNAs receive only 3'-terminal CCA, unstable tRNAs are marked with CCACCA and rapidly degraded. The sequence is that of Multifunctional CCA protein from Neisseria gonorrhoeae (strain ATCC 700825 / FA 1090).